A 289-amino-acid polypeptide reads, in one-letter code: uncharacterized protein (289 aa).

This is an uncharacterized protein from Homo sapiens (Human).